The primary structure comprises 180 residues: ATP synthase subunit delta (180 aa).

It belongs to the ATPase delta chain family. In terms of assembly, F-type ATPases have 2 components, F(1) - the catalytic core - and F(0) - the membrane proton channel. F(1) has five subunits: alpha(3), beta(3), gamma(1), delta(1), epsilon(1). F(0) has three main subunits: a(1), b(2) and c(10-14). The alpha and beta chains form an alternating ring which encloses part of the gamma chain. F(1) is attached to F(0) by a central stalk formed by the gamma and epsilon chains, while a peripheral stalk is formed by the delta and b chains.

The protein resides in the cell inner membrane. Its function is as follows. F(1)F(0) ATP synthase produces ATP from ADP in the presence of a proton or sodium gradient. F-type ATPases consist of two structural domains, F(1) containing the extramembraneous catalytic core and F(0) containing the membrane proton channel, linked together by a central stalk and a peripheral stalk. During catalysis, ATP synthesis in the catalytic domain of F(1) is coupled via a rotary mechanism of the central stalk subunits to proton translocation. This protein is part of the stalk that links CF(0) to CF(1). It either transmits conformational changes from CF(0) to CF(1) or is implicated in proton conduction. In Acidovorax sp. (strain JS42), this protein is ATP synthase subunit delta.